The following is a 360-amino-acid chain: Mannose-1-phosphate guanylyltransferase catalytic subunit beta (360 aa).

The interval 2–222 (KALILVGGYG…QGFWMDIGQP (221 aa)) is substrate-binding domain. Asp110 serves as a coordination point for GDP-alpha-D-mannose. Residue Asp110 coordinates Mg(2+). Lys162 is a catalytic residue. Asp218 serves as a coordination point for GDP-alpha-D-mannose. Asp218 contacts Mg(2+). The hexapeptide repeat domain stretch occupies residues 245 to 360 (RAGPGFLGNV…DSVPEPRIIM (116 aa)).

The protein belongs to the transferase hexapeptide repeat family. Component of the GMPPA-GMPPB mannose-1-phosphate guanylyltransferase complex composed of 4 gmppa subunits and 8 gmppb subunits; the complex is organized into three layers, a central layer made up of 2 gmppa dimers sandwiched between two layers each made up of 2 gmppb dimers. Catalytic activity of gmppb is reduced when part of the complex and binding of GDP-alpha-D-Mannose by gmppa induces allosteric feedback inhibition of gmppb. The cofactor is Mg(2+).

It carries out the reaction alpha-D-mannose 1-phosphate + GTP + H(+) = GDP-alpha-D-mannose + diphosphate. It functions in the pathway nucleotide-sugar biosynthesis; GDP-alpha-D-mannose biosynthesis; GDP-alpha-D-mannose from alpha-D-mannose 1-phosphate (GTP route): step 1/1. Its activity is regulated as follows. Enzyme activity is reduced by incorporation into the GMPPA-GMPPB mannose-1-phosphate guanylyltransferase complex. Allosterically inhibited, when part of the GMPPA-GMPPB complex, by GDP-alpha-D-mannose binding to GMPPA. Catalytic subunit of the GMPPA-GMPPB mannose-1-phosphate guanylyltransferase complex. Catalyzes the formation of GDP-mannose, an essential precursor of glycan moieties of glycoproteins and glycolipids. Can catalyze the reverse reaction in vitro. Together with GMPPA regulates GDP-alpha-D-mannose levels. The polypeptide is Mannose-1-phosphate guanylyltransferase catalytic subunit beta (gmppb) (Danio rerio (Zebrafish)).